We begin with the raw amino-acid sequence, 77 residues long: uncharacterized protein (77 aa).

This is an uncharacterized protein from Escherichia phage 186 (Bacteriophage 186).